The chain runs to 542 residues: Formate--tetrahydrofolate ligase (542 aa).

53-60 (TPAGEGKT) is an ATP binding site.

It belongs to the formate--tetrahydrofolate ligase family.

It catalyses the reaction (6S)-5,6,7,8-tetrahydrofolate + formate + ATP = (6R)-10-formyltetrahydrofolate + ADP + phosphate. Its pathway is one-carbon metabolism; tetrahydrofolate interconversion. The polypeptide is Formate--tetrahydrofolate ligase (Thermotoga maritima (strain ATCC 43589 / DSM 3109 / JCM 10099 / NBRC 100826 / MSB8)).